Consider the following 44-residue polypeptide: MEFIVVLLLLLRYFRLALKVRILHIFYKCFFEFFLTYSNCRFFV.

This is an uncharacterized protein from Bacillus subtilis (Bacteriophage phi-105).